The following is a 105-amino-acid chain: MAPVKSQESINQKLALVIKSGKYTLGYKSTVKSLRQGKSKLIIIAANTPVLRKSELEYYAMLSKTKVYYFQGGNNELGTAVGKLFRVGVVSILEAGDSDILTTLA.

Residues Lys22, Lys53, and Lys83 each participate in a glycyl lysine isopeptide (Lys-Gly) (interchain with G-Cter in ubiquitin) cross-link.

Belongs to the eukaryotic ribosomal protein eL30 family. As to quaternary structure, component of the large ribosomal subunit (LSU). Mature yeast ribosomes consist of a small (40S) and a large (60S) subunit. The 40S small subunit contains 1 molecule of ribosomal RNA (18S rRNA) and 33 different proteins (encoded by 57 genes). The large 60S subunit contains 3 rRNA molecules (25S, 5.8S and 5S rRNA) and 46 different proteins (encoded by 81 genes).

Its subcellular location is the cytoplasm. Its function is as follows. Component of the ribosome, a large ribonucleoprotein complex responsible for the synthesis of proteins in the cell. The small ribosomal subunit (SSU) binds messenger RNAs (mRNAs) and translates the encoded message by selecting cognate aminoacyl-transfer RNA (tRNA) molecules. The large subunit (LSU) contains the ribosomal catalytic site termed the peptidyl transferase center (PTC), which catalyzes the formation of peptide bonds, thereby polymerizing the amino acids delivered by tRNAs into a polypeptide chain. The nascent polypeptides leave the ribosome through a tunnel in the LSU and interact with protein factors that function in enzymatic processing, targeting, and the membrane insertion of nascent chains at the exit of the ribosomal tunnel. This is Large ribosomal subunit protein eL30 from Saccharomyces cerevisiae (strain ATCC 204508 / S288c) (Baker's yeast).